Here is a 152-residue protein sequence, read N- to C-terminus: Sulfur-rich protein (152 aa).

Residues 1–11 (MSTTPIVSGVT) show a composition bias toward polar residues. A disordered region spans residues 1–21 (MSTTPIVSGVTSQNNSSENVS). Residues 12–21 (SQNNSSENVS) are compositionally biased toward low complexity. 2 consecutive transmembrane segments (helical) span residues 44 to 64 (VGLA…LFIL) and 73 to 93 (IYLA…ILSM).

Its subcellular location is the membrane. This is Sulfur-rich protein (srp) from Chlamydia muridarum (strain MoPn / Nigg).